Consider the following 35-residue polypeptide: Kappa-theraphotoxin-Gr1b (35 aa).

3 disulfides stabilise this stretch: Cys2/Cys16, Cys9/Cys21, and Cys15/Cys28. An involved in active face region spans residues 4-6 (YLF).

Belongs to the neurotoxin 10 (Hwtx-1) family. 09 (HaTx) subfamily. As to expression, expressed by the venom gland.

It localises to the secreted. In terms of biological role, inhibitor of voltage-gated potassium channels. Inhibits Kv2.1/KCNB1 channels, by shifting activation of the channel to more depolarized voltages. The toxin binding sites may be situated on the S3-S4 extracellular linker of the channel. One, two, three or four toxin molecules may bind the Kv2.1/KCNB1 channel. May need to partition into the membrane in order to bind to the channel. Antibacterial activity is not observed. The protein is Kappa-theraphotoxin-Gr1b of Grammostola rosea (Chilean rose tarantula).